Reading from the N-terminus, the 733-residue chain is ATP-dependent RNA helicase DBP7 (733 aa).

2 disordered regions span residues methionine 1 to isoleucine 92 and serine 119 to proline 139. Residues serine 17–valine 30 show a composition bias toward polar residues. Over residues glutamine 52–threonine 80 the composition is skewed to basic and acidic residues. Residues serine 144–lysine 173 carry the Q motif motif. A Helicase ATP-binding domain is found at proline 177–isoleucine 372. ATP is bound at residue alanine 190 to threonine 197. The DEAD box motif lies at aspartate 304–aspartate 307. The region spanning threonine 406 to phenylalanine 596 is the Helicase C-terminal domain. A disordered region spans residues lysine 687–lysine 714.

This sequence belongs to the DEAD box helicase family. DDX31/DBP7 subfamily.

Its subcellular location is the nucleus. It localises to the nucleolus. It carries out the reaction ATP + H2O = ADP + phosphate + H(+). Its function is as follows. ATP-binding RNA helicase involved in the biogenesis of 60S ribosomal subunits and is required for the normal formation of 25S and 5.8S rRNAs. The chain is ATP-dependent RNA helicase DBP7 (DPB7) from Scheffersomyces stipitis (strain ATCC 58785 / CBS 6054 / NBRC 10063 / NRRL Y-11545) (Yeast).